The following is a 185-amino-acid chain: Ribosome-recycling factor (185 aa).

This sequence belongs to the RRF family.

It is found in the cytoplasm. In terms of biological role, responsible for the release of ribosomes from messenger RNA at the termination of protein biosynthesis. May increase the efficiency of translation by recycling ribosomes from one round of translation to another. This Shewanella baltica (strain OS223) protein is Ribosome-recycling factor.